We begin with the raw amino-acid sequence, 168 residues long: Protein-export protein SecB (168 aa).

It belongs to the SecB family. As to quaternary structure, homotetramer, a dimer of dimers. One homotetramer interacts with 1 SecA dimer.

The protein localises to the cytoplasm. Functionally, one of the proteins required for the normal export of preproteins out of the cell cytoplasm. It is a molecular chaperone that binds to a subset of precursor proteins, maintaining them in a translocation-competent state. It also specifically binds to its receptor SecA. The sequence is that of Protein-export protein SecB from Glaesserella parasuis serovar 5 (strain SH0165) (Haemophilus parasuis).